Here is a 204-residue protein sequence, read N- to C-terminus: Small ribosomal subunit protein uS4c (204 aa).

The 61-residue stretch at Met-90–Ile-150 folds into the S4 RNA-binding domain.

Belongs to the universal ribosomal protein uS4 family. As to quaternary structure, part of the 30S ribosomal subunit. Contacts protein S5. The interaction surface between S4 and S5 is involved in control of translational fidelity.

The protein resides in the plastid. It localises to the chloroplast. Functionally, one of the primary rRNA binding proteins, it binds directly to 16S rRNA where it nucleates assembly of the body of the 30S subunit. Its function is as follows. With S5 and S12 plays an important role in translational accuracy. This is Small ribosomal subunit protein uS4c (rps4) from Gnetum parvifolium (Small-leaved jointfir).